Reading from the N-terminus, the 354-residue chain is Chaperone protein dnaJ 49 (354 aa).

Residues 99-163 (DYYAILGLEK…NSRRQFDQVG (65 aa)) enclose the J domain. Residues 237 to 257 (CLTIIQILPFFLLLLLAYLPF) traverse the membrane as a helical segment.

This sequence belongs to the DnaJ family. C/III subfamily.

It is found in the membrane. In terms of biological role, plays a continuous role in plant development probably in the structural organization of compartments. This chain is Chaperone protein dnaJ 49 (ATJ49), found in Arabidopsis thaliana (Mouse-ear cress).